The chain runs to 1155 residues: uncharacterized protein (1155 aa).

Residues 1-19 (MNKNIFITLLISSLLLLSG) form the signal peptide. Cysteine 20 carries N-palmitoyl cysteine lipidation. Cysteine 20 is lipidated: S-diacylglycerol cysteine. Transmembrane regions (helical) follow at residues 291 to 311 (VSAI…IGNI), 395 to 415 (LGFI…FLIF), 424 to 444 (ALIT…FMLF), and 459 to 479 (ISYA…SMII).

This sequence belongs to the TrbL/VirB6 family.

It is found in the cell membrane. This is an uncharacterized protein from Rickettsia felis (strain ATCC VR-1525 / URRWXCal2) (Rickettsia azadi).